Here is a 482-residue protein sequence, read N- to C-terminus: UDP-N-acetylmuramate--L-alanine ligase (482 aa).

The disordered stretch occupies residues 1–26 (MPQLPMTDSAPLPTPAPSSPAQPSAQ). 140-146 (GTHGKTT) contributes to the ATP binding site.

Belongs to the MurCDEF family.

The protein resides in the cytoplasm. The enzyme catalyses UDP-N-acetyl-alpha-D-muramate + L-alanine + ATP = UDP-N-acetyl-alpha-D-muramoyl-L-alanine + ADP + phosphate + H(+). It functions in the pathway cell wall biogenesis; peptidoglycan biosynthesis. In terms of biological role, cell wall formation. This is UDP-N-acetylmuramate--L-alanine ligase from Deinococcus radiodurans (strain ATCC 13939 / DSM 20539 / JCM 16871 / CCUG 27074 / LMG 4051 / NBRC 15346 / NCIMB 9279 / VKM B-1422 / R1).